Reading from the N-terminus, the 334-residue chain is Ribosomal RNA small subunit methyltransferase H (334 aa).

S-adenosyl-L-methionine-binding positions include 53–55 (GGH), Asp72, Phe99, Asp122, and His129.

This sequence belongs to the methyltransferase superfamily. RsmH family.

Its subcellular location is the cytoplasm. The enzyme catalyses cytidine(1402) in 16S rRNA + S-adenosyl-L-methionine = N(4)-methylcytidine(1402) in 16S rRNA + S-adenosyl-L-homocysteine + H(+). Specifically methylates the N4 position of cytidine in position 1402 (C1402) of 16S rRNA. This chain is Ribosomal RNA small subunit methyltransferase H, found in Leptospira interrogans serogroup Icterohaemorrhagiae serovar copenhageni (strain Fiocruz L1-130).